Here is a 513-residue protein sequence, read N- to C-terminus: Na(+)/H(+) antiporter NhaB (513 aa).

The next 12 helical transmembrane spans lie at 23–43 (LALIIFLIVNPLIFLISPFVA), 52–72 (IFTLAMALKCYPLLPGGLLAI), 97–117 (LLLMFMVAGIYFMKQLLLFIF), 120–140 (LLLSIRSKMLLSLSFCVAAAF), 144–164 (FLDALTVVAVVISVAVGFYGI), 202–222 (LMMHAGVGTALGGVMTMVGEP), 238–258 (FFLRMSPVTVPVLICGLLTCL), 303–323 (AIIGVWLVTALALHLAEVGLI), 348–368 (TESLPFTALLTVFFSVVAVII), 391–411 (LFYIFNGLLSSISDNVFVGTI), 447–467 (ATPNGQAAFLFLLTSALAPLI), and 475–495 (VWMALPYTLVLTLVGLLCVEF).

This sequence belongs to the NhaB Na(+)/H(+) (TC 2.A.34) antiporter family.

It is found in the cell inner membrane. It catalyses the reaction 2 Na(+)(in) + 3 H(+)(out) = 2 Na(+)(out) + 3 H(+)(in). Its function is as follows. Na(+)/H(+) antiporter that extrudes sodium in exchange for external protons. This chain is Na(+)/H(+) antiporter NhaB, found in Escherichia coli O45:K1 (strain S88 / ExPEC).